The following is a 221-amino-acid chain: Uracil-DNA glycosylase (221 aa).

The active-site Proton acceptor is Asp-63.

Belongs to the uracil-DNA glycosylase (UDG) superfamily. UNG family.

The protein localises to the cytoplasm. It carries out the reaction Hydrolyzes single-stranded DNA or mismatched double-stranded DNA and polynucleotides, releasing free uracil.. Its function is as follows. Excises uracil residues from the DNA which can arise as a result of misincorporation of dUMP residues by DNA polymerase or due to deamination of cytosine. The protein is Uracil-DNA glycosylase of Blochmanniella floridana.